The chain runs to 492 residues: Fascin-2 (492 aa).

The protein belongs to the fascin family. In terms of tissue distribution, expressed in the inner ear. Abundant in the utricle.

Its subcellular location is the cytoplasm. It localises to the cytoskeleton. The protein resides in the cell projection. The protein localises to the stereocilium. Acts as an actin bundling protein. May play a pivotal role in photoreceptor cell-specific events, such as disk morphogenesis. Important for maintaining functional hair-cell bundles in the inner ear. May stiffen the longer stereocilia of hair-cell bundles in the inner ear enabling better force transmission to tip links. The polypeptide is Fascin-2 (Fscn2) (Mus musculus (Mouse)).